Reading from the N-terminus, the 352-residue chain is Thiamine-monophosphate kinase (352 aa).

Positions 58, 73, and 75 each coordinate Mg(2+). Histidine 82 contacts substrate. The Mg(2+) site is built by aspartate 103 and aspartate 151. ATP-binding positions include 150–151 (GD) and arginine 177. A Mg(2+)-binding site is contributed by aspartate 239. Serine 241 is a binding site for ATP. Position 242 (aspartate 242) interacts with Mg(2+). Substrate-binding residues include aspartate 294 and tryptophan 349.

Belongs to the thiamine-monophosphate kinase family.

The catalysed reaction is thiamine phosphate + ATP = thiamine diphosphate + ADP. It functions in the pathway cofactor biosynthesis; thiamine diphosphate biosynthesis; thiamine diphosphate from thiamine phosphate: step 1/1. Functionally, catalyzes the ATP-dependent phosphorylation of thiamine-monophosphate (TMP) to form thiamine-pyrophosphate (TPP), the active form of vitamin B1. The chain is Thiamine-monophosphate kinase from Caulobacter vibrioides (strain ATCC 19089 / CIP 103742 / CB 15) (Caulobacter crescentus).